We begin with the raw amino-acid sequence, 150 residues long: D-aminoacyl-tRNA deacylase (150 aa).

The short motif at 136–137 (GP) is the Gly-cisPro motif, important for rejection of L-amino acids element.

Belongs to the DTD family. Homodimer.

It is found in the cytoplasm. It catalyses the reaction glycyl-tRNA(Ala) + H2O = tRNA(Ala) + glycine + H(+). The catalysed reaction is a D-aminoacyl-tRNA + H2O = a tRNA + a D-alpha-amino acid + H(+). Functionally, an aminoacyl-tRNA editing enzyme that deacylates mischarged D-aminoacyl-tRNAs. Also deacylates mischarged glycyl-tRNA(Ala), protecting cells against glycine mischarging by AlaRS. Acts via tRNA-based rather than protein-based catalysis; rejects L-amino acids rather than detecting D-amino acids in the active site. By recycling D-aminoacyl-tRNA to D-amino acids and free tRNA molecules, this enzyme counteracts the toxicity associated with the formation of D-aminoacyl-tRNA entities in vivo and helps enforce protein L-homochirality. The sequence is that of D-aminoacyl-tRNA deacylase from Staphylococcus aureus (strain bovine RF122 / ET3-1).